Consider the following 108-residue polypeptide: U3-lycotoxin-Ls1w (108 aa).

The signal sequence occupies residues 1 to 20 (MKFVLLFGVLLVTLFSYSSA). The propeptide occupies 21-44 (EMLDDFDQADEDELLSLIEKEEAR). 4 cysteine pairs are disulfide-bonded: Cys-48-Cys-63, Cys-55-Cys-72, Cys-62-Cys-87, and Cys-74-Cys-85.

Belongs to the neurotoxin 19 (CSTX) family. 01 subfamily. Expressed by the venom gland.

It is found in the secreted. This is U3-lycotoxin-Ls1w from Lycosa singoriensis (Wolf spider).